Reading from the N-terminus, the 88-residue chain is Small ribosomal subunit protein bS16c (88 aa).

It belongs to the bacterial ribosomal protein bS16 family.

It localises to the plastid. The protein resides in the chloroplast. This Calycanthus floridus var. glaucus (Eastern sweetshrub) protein is Small ribosomal subunit protein bS16c.